A 336-amino-acid chain; its full sequence is 3-isopropylmalate dehydrogenase (336 aa).

Residues Arg-87, Arg-97, Arg-121, and Asp-211 each coordinate substrate. The Mg(2+) site is built by Asp-211, Asp-235, and Asp-239. 271–283 (GSAPDIAGQGIAD) lines the NAD(+) pocket.

This sequence belongs to the isocitrate and isopropylmalate dehydrogenases family. LeuB type 2 subfamily. In terms of assembly, homodimer. It depends on Mg(2+) as a cofactor. The cofactor is Mn(2+).

It localises to the cytoplasm. The catalysed reaction is (2R,3S)-3-isopropylmalate + NAD(+) = 4-methyl-2-oxopentanoate + CO2 + NADH. The protein operates within amino-acid biosynthesis; L-leucine biosynthesis; L-leucine from 3-methyl-2-oxobutanoate: step 3/4. Catalyzes the oxidation of 3-carboxy-2-hydroxy-4-methylpentanoate (3-isopropylmalate) to 3-carboxy-4-methyl-2-oxopentanoate. The product decarboxylates to 4-methyl-2 oxopentanoate. This chain is 3-isopropylmalate dehydrogenase, found in Mycobacterium bovis (strain ATCC BAA-935 / AF2122/97).